The primary structure comprises 252 residues: Iron-sulfur cluster co-chaperone protein HscB homolog (252 aa).

A mitochondrion-targeting transit peptide spans 1–59 (MKKTKTMVASISTLIRRTYPSTNQCNSLATIQSQTQLPRESLQHHSSAEGRLRFSGRVF). Positions 93-165 (DYFQIFGLEK…LSRAMYIMKL (73 aa)) constitute a J domain.

It belongs to the HscB family. In terms of assembly, interacts with ISU1 and HSP70-9/HSCA1.

Its subcellular location is the mitochondrion. It is found in the cytoplasm. It localises to the cytosol. Co-chaperone required for the assembly of iron-sulfur [Fe-S] clusters in both mitochondria and cytosol. Required for the activity of iron-sulfur proteins such as aconitase and succinate dehydrogenase. Involved in iron homeostasis and may take part in the control of iron translocation from roots to shoots. The protein is Iron-sulfur cluster co-chaperone protein HscB homolog of Arabidopsis thaliana (Mouse-ear cress).